The following is a 180-amino-acid chain: UPF0134 protein MPN_127 (180 aa).

This sequence belongs to the UPF0134 family.

The sequence is that of UPF0134 protein MPN_127 from Mycoplasma pneumoniae (strain ATCC 29342 / M129 / Subtype 1) (Mycoplasmoides pneumoniae).